A 128-amino-acid polypeptide reads, in one-letter code: Small ribosomal subunit protein uS9 (128 aa).

This sequence belongs to the universal ribosomal protein uS9 family.

The sequence is that of Small ribosomal subunit protein uS9 from Amoebophilus asiaticus (strain 5a2).